An 86-amino-acid chain; its full sequence is Putative membrane protein insertion efficiency factor (86 aa).

The protein belongs to the UPF0161 family.

Its subcellular location is the cell inner membrane. Could be involved in insertion of integral membrane proteins into the membrane. The protein is Putative membrane protein insertion efficiency factor of Oleidesulfovibrio alaskensis (strain ATCC BAA-1058 / DSM 17464 / G20) (Desulfovibrio alaskensis).